A 251-amino-acid polypeptide reads, in one-letter code: Probable-ribose 5-phosphate isomerase (251 aa).

The protein belongs to the ribose 5-phosphate isomerase family.

The enzyme catalyses aldehydo-D-ribose 5-phosphate = D-ribulose 5-phosphate. It participates in carbohydrate degradation; pentose phosphate pathway; D-ribose 5-phosphate from D-ribulose 5-phosphate (non-oxidative stage): step 1/1. This Caenorhabditis elegans protein is Probable-ribose 5-phosphate isomerase (rpia-1).